The chain runs to 376 residues: Actin, macronuclear (376 aa).

It belongs to the actin family.

It localises to the cytoplasm. Its subcellular location is the cytoskeleton. It catalyses the reaction ATP + H2O = ADP + phosphate + H(+). Its function is as follows. Actins are highly conserved proteins that are involved in various types of cell motility and are ubiquitously expressed in all eukaryotic cells. This is Actin, macronuclear from Tetrahymena thermophila.